We begin with the raw amino-acid sequence, 787 residues long: Integrin beta-6 (787 aa).

The signal sequence occupies residues 1-21 (MGIELVCLFLLLLGRNDHVQG). The PSI domain occupies 22–71 (GCAWGGAESCSDCLLTGPHCAWCSQENFTHLSGAGERCDTPANLLAKGCQ). Topologically, residues 22-708 (GCAWGGAESC…KDCPKPPNIP (687 aa)) are extracellular. 19 cysteine pairs are disulfide-bonded: cysteine 23/cysteine 41, cysteine 31/cysteine 454, cysteine 34/cysteine 59, cysteine 44/cysteine 70, cysteine 197/cysteine 204, cysteine 252/cysteine 293, cysteine 394/cysteine 406, cysteine 426/cysteine 452, cysteine 456/cysteine 476, cysteine 467/cysteine 479, cysteine 481/cysteine 490, cysteine 492/cysteine 519, cysteine 502/cysteine 517, cysteine 511/cysteine 522, cysteine 524/cysteine 537, cysteine 539/cysteine 560, cysteine 544/cysteine 558, cysteine 552/cysteine 563, and cysteine 565/cysteine 574. N-linked (GlcNAc...) asparagine glycosylation is found at asparagine 48 and asparagine 97. Residues 131-371 (YPVDLYYLMD…QLIISAYEEL (241 aa)) form the VWFA domain. Residues aspartate 140, serine 142, and serine 144 each contribute to the Mg(2+) site. Positions 144, 147, 148, and 179 each coordinate Ca(2+). 4 residues coordinate Ca(2+): asparagine 235, aspartate 237, proline 239, and glutamate 240. A Mg(2+)-binding site is contributed by glutamate 240. The N-linked (GlcNAc...) asparagine glycan is linked to asparagine 260. Ca(2+) is bound by residues aspartate 271 and lysine 355. An N-linked (GlcNAc...) asparagine glycan is attached at asparagine 387. An N-linked (GlcNAc...) asparagine glycan is attached at asparagine 418. I-EGF domains lie at 456–491 (CQRE…PHCE), 492–538 (CGED…PYCQ), 539–575 (CDNF…EYCN), and 576–615 (CTTN…PTCE). 2 N-linked (GlcNAc...) asparagine glycosylation sites follow: asparagine 463 and asparagine 471. N-linked (GlcNAc...) asparagine glycosylation is present at asparagine 541. An N-linked (GlcNAc...) asparagine glycan is attached at asparagine 575. Cystine bridges form between cysteine 576–cysteine 599, cysteine 583–cysteine 597, cysteine 591–cysteine 602, cysteine 604–cysteine 614, cysteine 617–cysteine 620, cysteine 624–cysteine 669, cysteine 630–cysteine 649, cysteine 633–cysteine 645, and cysteine 677–cysteine 701. A helical membrane pass occupies residues 709-729 (MIMLGVSLAILLIGVVLLCIW). An interaction with HAX1 region spans residues 730–757 (KLLVSFHDRKEVAKFEAERSKAKWQTGT). Residues 730-787 (KLLVSFHDRKEVAKFEAERSKAKWQTGTNPLYRGSTSTFKNVTYKHREKHKAGLSSDG) lie on the Cytoplasmic side of the membrane.

This sequence belongs to the integrin beta chain family. As to quaternary structure, heterodimer of an alpha and a beta subunit. Interacts with FLNB. Interacts with HAX1. ITGAV:ITGB6 interacts with FBN1. ITGAV:ITGB6 interacts with TGFB1.

Its subcellular location is the cell membrane. It localises to the cell junction. The protein resides in the focal adhesion. Its function is as follows. Integrin alpha-V:beta-6 (ITGAV:ITGB6) is a receptor for fibronectin and cytotactin. It recognizes the sequence R-G-D in its ligands. ITGAV:ITGB6 acts as a receptor for fibrillin-1 (FBN1) and mediates R-G-D-dependent cell adhesion to FBN1. Integrin alpha-V:beta-6 (ITGAV:ITGB6) mediates R-G-D-dependent release of transforming growth factor beta-1 (TGF-beta-1) from regulatory Latency-associated peptide (LAP), thereby playing a key role in TGF-beta-1 activation. This chain is Integrin beta-6 (Itgb6), found in Mus musculus (Mouse).